The sequence spans 401 residues: tRNA N6-adenosine threonylcarbamoyltransferase (401 aa).

2 residues coordinate Fe cation: His111 and His115. Residues 191 to 195 (LASGG), Asp223, Gly236, and Asn336 contribute to the substrate site. Asp364 is a Fe cation binding site.

Belongs to the KAE1 / TsaD family. The cofactor is Fe(2+).

It is found in the cytoplasm. It carries out the reaction L-threonylcarbamoyladenylate + adenosine(37) in tRNA = N(6)-L-threonylcarbamoyladenosine(37) in tRNA + AMP + H(+). In terms of biological role, required for the formation of a threonylcarbamoyl group on adenosine at position 37 (t(6)A37) in tRNAs that read codons beginning with adenine. Is involved in the transfer of the threonylcarbamoyl moiety of threonylcarbamoyl-AMP (TC-AMP) to the N6 group of A37, together with TsaE and TsaB. TsaD likely plays a direct catalytic role in this reaction. In Tropheryma whipplei (strain TW08/27) (Whipple's bacillus), this protein is tRNA N6-adenosine threonylcarbamoyltransferase.